The sequence spans 444 residues: Methylenetetrahydrofolate--tRNA-(uracil-5-)-methyltransferase TrmFO (444 aa).

10–15 (GAGLAG) is an FAD binding site.

Belongs to the MnmG family. TrmFO subfamily. FAD is required as a cofactor.

Its subcellular location is the cytoplasm. It catalyses the reaction uridine(54) in tRNA + (6R)-5,10-methylene-5,6,7,8-tetrahydrofolate + NADH + H(+) = 5-methyluridine(54) in tRNA + (6S)-5,6,7,8-tetrahydrofolate + NAD(+). The enzyme catalyses uridine(54) in tRNA + (6R)-5,10-methylene-5,6,7,8-tetrahydrofolate + NADPH + H(+) = 5-methyluridine(54) in tRNA + (6S)-5,6,7,8-tetrahydrofolate + NADP(+). Functionally, catalyzes the folate-dependent formation of 5-methyl-uridine at position 54 (M-5-U54) in all tRNAs. This is Methylenetetrahydrofolate--tRNA-(uracil-5-)-methyltransferase TrmFO from Streptococcus gordonii (strain Challis / ATCC 35105 / BCRC 15272 / CH1 / DL1 / V288).